We begin with the raw amino-acid sequence, 232 residues long: Phosphatidylserine decarboxylase proenzyme (232 aa).

Catalysis depends on S190, which acts as the Schiff-base intermediate with substrate; via pyruvic acid. Position 190 is a pyruvic acid (Ser); by autocatalysis (S190).

The protein belongs to the phosphatidylserine decarboxylase family. PSD-A subfamily. In terms of assembly, heterodimer of a large membrane-associated beta subunit and a small pyruvoyl-containing alpha subunit. Pyruvate serves as cofactor. In terms of processing, is synthesized initially as an inactive proenzyme. Formation of the active enzyme involves a self-maturation process in which the active site pyruvoyl group is generated from an internal serine residue via an autocatalytic post-translational modification. Two non-identical subunits are generated from the proenzyme in this reaction, and the pyruvate is formed at the N-terminus of the alpha chain, which is derived from the carboxyl end of the proenzyme. The post-translation cleavage follows an unusual pathway, termed non-hydrolytic serinolysis, in which the side chain hydroxyl group of the serine supplies its oxygen atom to form the C-terminus of the beta chain, while the remainder of the serine residue undergoes an oxidative deamination to produce ammonia and the pyruvoyl prosthetic group on the alpha chain.

The protein localises to the cell membrane. It carries out the reaction a 1,2-diacyl-sn-glycero-3-phospho-L-serine + H(+) = a 1,2-diacyl-sn-glycero-3-phosphoethanolamine + CO2. The protein operates within phospholipid metabolism; phosphatidylethanolamine biosynthesis; phosphatidylethanolamine from CDP-diacylglycerol: step 2/2. Its function is as follows. Catalyzes the formation of phosphatidylethanolamine (PtdEtn) from phosphatidylserine (PtdSer). The polypeptide is Phosphatidylserine decarboxylase proenzyme (Rhizobium leguminosarum bv. trifolii (strain WSM2304)).